The chain runs to 520 residues: Zinc finger and BTB domain-containing protein 18 (520 aa).

The region spanning 24–91 is the BTB domain; the sequence is CDCTVLVGDA…MYEGILQFKG (68 aa). Residues 121 to 140 form a disordered region; the sequence is ATTDSTKKEEDTSSFSDKVE. C2H2-type zinc fingers lie at residues 368–390, 408–430, 436–458, and 464–487; these read FMCP…LSTH, PTCS…ERTH, YTCT…AVVH, and HACK…RKFH.

It belongs to the krueppel C2H2-type zinc-finger protein family. ZBTB18 subfamily.

Its subcellular location is the nucleus. In terms of biological role, transcriptional repressor that plays a role in various developmental processes. Specifically binds the consensus DNA sequence 5'-[AC]ACATCTG[GT][AC]-3' which contains the E box core, and acts by recruiting chromatin remodeling multiprotein complexes. The chain is Zinc finger and BTB domain-containing protein 18 (zbtb18) from Xenopus laevis (African clawed frog).